A 508-amino-acid chain; its full sequence is Catalase (508 aa).

Active-site residues include H63 and N136. Y346 is a heme binding site.

It belongs to the catalase family. As to quaternary structure, homohexamer. Requires heme as cofactor.

Its subcellular location is the cytoplasm. The enzyme catalyses 2 H2O2 = O2 + 2 H2O. Decomposes hydrogen peroxide into water and oxygen; serves to protect cells from the toxic effects of hydrogen peroxide. The sequence is that of Catalase (katA) from Haemophilus influenzae (strain ATCC 51907 / DSM 11121 / KW20 / Rd).